We begin with the raw amino-acid sequence, 461 residues long: Argininosuccinate lyase (461 aa).

This sequence belongs to the lyase 1 family. Argininosuccinate lyase subfamily.

Its subcellular location is the cytoplasm. The catalysed reaction is 2-(N(omega)-L-arginino)succinate = fumarate + L-arginine. Its pathway is amino-acid biosynthesis; L-arginine biosynthesis; L-arginine from L-ornithine and carbamoyl phosphate: step 3/3. This chain is Argininosuccinate lyase, found in Streptococcus gordonii (strain Challis / ATCC 35105 / BCRC 15272 / CH1 / DL1 / V288).